The chain runs to 704 residues: Polyribonucleotide nucleotidyltransferase 4 (704 aa).

The Mg(2+) site is built by aspartate 483 and aspartate 489. In terms of domain architecture, KH spans 550-609 (PRVLKMKIHPDKIRDVIGSGGKTINRIIDETGVKIDIDNDGTIFIAAESQEAVEKAIIII). The region spanning 619 to 687 (GQNYTGKVIK…QQGKINLSRK (69 aa)) is the S1 motif domain.

Belongs to the polyribonucleotide nucleotidyltransferase family. Mg(2+) is required as a cofactor.

The protein resides in the cytoplasm. It catalyses the reaction RNA(n+1) + phosphate = RNA(n) + a ribonucleoside 5'-diphosphate. Its function is as follows. Involved in mRNA degradation. Catalyzes the phosphorolysis of single-stranded polyribonucleotides processively in the 3'- to 5'-direction. The chain is Polyribonucleotide nucleotidyltransferase 4 from Alkaliphilus metalliredigens (strain QYMF).